Reading from the N-terminus, the 70-residue chain is Small, acid-soluble spore protein alpha (70 aa).

The protein belongs to the alpha/beta-type SASP family.

Functionally, SASP are bound to spore DNA. They are double-stranded DNA-binding proteins that cause DNA to change to an a-like conformation. They protect the DNA backbone from chemical and enzymatic cleavage and are thus involved in dormant spore's high resistance to UV light. The polypeptide is Small, acid-soluble spore protein alpha (Paraclostridium bifermentans (Clostridium bifermentans)).